The sequence spans 682 residues: Methionine synthase reductase (682 aa).

The 144-residue stretch at phenylalanine 4–phenylalanine 147 folds into the Flavodoxin-like domain. Leucine 93–phenylalanine 124 contributes to the FMN binding site. The FAD-binding FR-type domain occupies threonine 271–proline 516. Lysine 293 serves as a coordination point for NADP(+). Residues arginine 455–serine 458 and glycine 488–threonine 491 each bind FAD. NADP(+)-binding positions include arginine 607–glutamine 609 and aspartate 643. Tryptophan 681 is an FAD binding site.

The cofactor is FAD. It depends on FMN as a cofactor.

It catalyses the reaction 2 methylcob(III)alamin-[methionine synthase] + 2 S-adenosyl-L-homocysteine + NADP(+) + H(+) = 2 cob(II)alamin-[methionine synthase] + 2 S-adenosyl-L-methionine + NADPH. Functionally, involved in the reductive regeneration of cob(I)alamin cofactor required for the maintenance of methionine synthase in a functional state. The sequence is that of Methionine synthase reductase from Caenorhabditis elegans.